The chain runs to 616 residues: DNA mismatch repair protein MutL (616 aa).

Belongs to the DNA mismatch repair MutL/HexB family.

Functionally, this protein is involved in the repair of mismatches in DNA. It is required for dam-dependent methyl-directed DNA mismatch repair. May act as a 'molecular matchmaker', a protein that promotes the formation of a stable complex between two or more DNA-binding proteins in an ATP-dependent manner without itself being part of a final effector complex. The chain is DNA mismatch repair protein MutL from Syntrophus aciditrophicus (strain SB).